The following is a 226-amino-acid chain: Transmembrane gamma-carboxyglutamic acid protein 4 (226 aa).

The first 17 residues, 1–17 (MFTLLVLLSQLPTVTLG), serve as a signal peptide directing secretion. Residues 18–49 (FPHCARGPKASKHAGEEVFTSKEEANFFIHRR) constitute a propeptide that is removed on maturation. Residues 50 to 113 (LLYNRFDLEL…KSDGNREKID (64 aa)) lie on the Extracellular side of the membrane. A Gla domain is found at 52–98 (YNRFDLELFTPGNLERECNEELCNYEEAREIFVDEDKTIAFWQEYSA). The cysteines at positions 69 and 74 are disulfide-linked. At E72 the chain carries 4-carboxyglutamate. A helical membrane pass occupies residues 114–134 (VMGLLTGLIAAGVFLVIFGLL). Topologically, residues 135 to 226 (GYYLCITKCN…FKKSMSLPSH (92 aa)) are cytoplasmic. The residue at position 163 (S163) is a Phosphoserine. Residues 186-189 (LPSY) carry the LPXY motif; mediates binding to WW domain-containing proteins motif. A PPXY motif; mediates binding to WW domain-containing proteins motif is present at residues 204 to 207 (PPPY).

It belongs to the commissureless family. Interacts (via cytoplasmic domain) with WW domain-containing proteins MAGI1, MAGI3, NEDD4, NEDD4L, WWTR1/TAZ and YAP1. In terms of processing, gamma-carboxyglutamate residues are formed by vitamin K dependent carboxylation. These residues are essential for the binding of calcium. In terms of tissue distribution, widely expressed with highest levels in kidney.

The protein localises to the endoplasmic reticulum-Golgi intermediate compartment membrane. Its subcellular location is the cell membrane. Functionally, may control axon guidance across the CNS. Prevents the delivery of ROBO1 at the cell surface and down-regulates its expression. The sequence is that of Transmembrane gamma-carboxyglutamic acid protein 4 from Homo sapiens (Human).